We begin with the raw amino-acid sequence, 157 residues long: Endoribonuclease YbeY (157 aa).

Positions 114, 118, and 124 each coordinate Zn(2+).

The protein belongs to the endoribonuclease YbeY family. It depends on Zn(2+) as a cofactor.

The protein resides in the cytoplasm. Single strand-specific metallo-endoribonuclease involved in late-stage 70S ribosome quality control and in maturation of the 3' terminus of the 16S rRNA. The sequence is that of Endoribonuclease YbeY from Yersinia pseudotuberculosis serotype O:1b (strain IP 31758).